The primary structure comprises 465 residues: Asparagine--tRNA ligase (465 aa).

The protein belongs to the class-II aminoacyl-tRNA synthetase family. As to quaternary structure, homodimer.

Its subcellular location is the cytoplasm. The catalysed reaction is tRNA(Asn) + L-asparagine + ATP = L-asparaginyl-tRNA(Asn) + AMP + diphosphate + H(+). This chain is Asparagine--tRNA ligase, found in Hahella chejuensis (strain KCTC 2396).